Consider the following 831-residue polypeptide: Prickle-like protein 1 (831 aa).

Positions 14 to 122 constitute a PET domain; that stretch reads FGCQRSSTSD…TIKLLSRAMM (109 aa). 3 consecutive LIM zinc-binding domains span residues 124–189, 189–249, and 249–313; these read AVCE…LLKP, PRCS…LYAE, and EYCE…EDIH. The interval 314-346 is disordered; sequence ASDSSDSAFQSARSRDSRRSVRMGRSSRSADQC. Residues S315, S591, and S594 each carry the phosphoserine modification. Disordered regions lie at residues 664–688 and 763–831; these read EERG…NALN and CSSS…CIIS. The segment covering 669–680 has biased composition (basic residues); it reads RPHHHRHRRSRK. Phosphoserine is present on S683. Residues 797–812 are compositionally biased toward polar residues; that stretch reads DLSSPASALPTPQFNQ. Residues 815 to 831 show a composition bias toward basic residues; sequence TKSKKKKGHRGKNCIIS. C828 is subject to Cysteine methyl ester. C828 carries S-farnesyl cysteine lipidation. Residues 829–831 constitute a propeptide, removed in mature form; it reads IIS.

It belongs to the prickle / espinas / testin family. As to quaternary structure, interacts with REST.

It is found in the nucleus membrane. The protein localises to the cytoplasm. It localises to the cytosol. Involved in the planar cell polarity pathway that controls convergent extension during gastrulation and neural tube closure. Convergent extension is a complex morphogenetic process during which cells elongate, move mediolaterally, and intercalate between neighboring cells, leading to convergence toward the mediolateral axis and extension along the anteroposterior axis. Necessary for nuclear localization of REST. May serve as nuclear receptor. The polypeptide is Prickle-like protein 1 (Prickle1) (Rattus norvegicus (Rat)).